Here is a 200-residue protein sequence, read N- to C-terminus: Cation channel sperm-associated auxiliary subunit zeta (200 aa).

A compositionally biased stretch (basic and acidic residues) spans Met1 to Asp29. 2 disordered regions span residues Met1–Trp31 and Asn58–Lys78.

As to quaternary structure, component of the CatSper complex or CatSpermasome composed of the core pore-forming members CATSPER1, CATSPER2, CATSPER3 and CATSPER4 as well as auxiliary members CATSPERB, CATSPERG, CATSPERD, CATSPERE, CATSPERZ, C2CD6/CATSPERT, TMEM249, TMEM262 and EFCAB9. HSPA1 may be an additional auxiliary complex member. The core complex members CATSPER1, CATSPER2, CATSPER3 and CATSPER4 form a heterotetrameric channel. The auxiliary CATSPERB, CATSPERG, CATSPERD and CATSPERE subunits form a pavilion-like structure over the pore which stabilizes the complex through interactions with CATSPER4, CATSPER3, CATSPER1 and CATSPER2 respectively. TMEM262/CATSPERH interacts with CATSPERB, further stabilizing the complex. C2CD6/CATSPERT interacts at least with CATSPERD and is required for targeting the CatSper complex in the flagellar membrane. Interacts with EFCAB9; the interaction is direct, Ca(2+)-dependent and connects EFCAB9 with the CatSper complex. Dissociates from EFCAB9 at elevated pH.

The protein resides in the cell projection. Its subcellular location is the cilium. The protein localises to the flagellum membrane. Its function is as follows. Auxiliary component of the CatSper complex, a complex involved in sperm cell hyperactivation. Sperm cell hyperactivation is needed for sperm motility which is essential late in the preparation of sperm for fertilization. Required for a distribution of the CatSper complex in linear quadrilateral nanodomains along the flagellum, maximizing fertilization inside the mammalian female reproductive tract. Together with EFCAB9, associates with the CatSper channel pore and is required for the two-row structure of each single CatSper channel. This Homo sapiens (Human) protein is Cation channel sperm-associated auxiliary subunit zeta.